Reading from the N-terminus, the 174-residue chain is Ribosome maturation factor RimM (174 aa).

The 74-residue stretch at 99 to 172 (ADEFFYHDVI…RLVIRPIAGL (74 aa)) folds into the PRC barrel domain.

It belongs to the RimM family. In terms of assembly, binds ribosomal protein uS19.

The protein localises to the cytoplasm. In terms of biological role, an accessory protein needed during the final step in the assembly of 30S ribosomal subunit, possibly for assembly of the head region. Essential for efficient processing of 16S rRNA. May be needed both before and after RbfA during the maturation of 16S rRNA. It has affinity for free ribosomal 30S subunits but not for 70S ribosomes. The polypeptide is Ribosome maturation factor RimM (Chloroflexus aurantiacus (strain ATCC 29366 / DSM 635 / J-10-fl)).